We begin with the raw amino-acid sequence, 192 residues long: Probable apo-citrate lyase phosphoribosyl-dephospho-CoA transferase (192 aa).

Belongs to the CitX family.

The enzyme catalyses apo-[citrate lyase ACP] + 2'-(5''-triphospho-alpha-D-ribosyl)-3'-dephospho-CoA = holo-[citrate lyase ACP] + diphosphate. Its function is as follows. Transfers 2-(5''-triphosphoribosyl)-3'-dephosphocoenzyme-A on a serine residue to the apo-acyl carrier protein (gamma chain) of the citrate lyase to yield holo-acyl carrier protein. In Streptococcus pyogenes serotype M18 (strain MGAS8232), this protein is Probable apo-citrate lyase phosphoribosyl-dephospho-CoA transferase.